The primary structure comprises 357 residues: Protein BMRF2 (357 aa).

The Virion surface portion of the chain corresponds to 1 to 11; it reads MFSCKQHLSLG. A transmembrane helix spans residues 12–32; sequence ACVFCLGLLASTPFIWCFVFA. At 33–46 the chain is on the intravirion side; sequence NLLSLEIFSPWQTH. Over 47-67 the chain traverses the membrane; that stretch reads VYRLGFPTACLMAVLWTLVPA. At 68–70 the chain is on the virion surface side; that stretch reads KHA. Positions 71–91 form a transmembrane segment; it reads VRAVTPAIMLNIASALIFFSL. Residues 92–98 lie on the Intravirion side of the membrane; that stretch reads RVYSTST. Over 99–121 the chain traverses the membrane; sequence WVSAPCLFLANLPLLCLWPRLAI. Residues 122–133 are Virion surface-facing; sequence EIVYICPAIHQR. The segment at 134 to 154 is a transmembrane helix; sequence FFELGLLLACTIFALSVVSRA. Topologically, residues 155–158 are intravirion; it reads LEVS. The chain crosses the lipid bilayer at residues 159 to 179; the sequence is AVFMSPFFIFLALGSGSLAGA. Topologically, residues 180–217 are virion surface; sequence RRNQIYTSGLERRRSIFCARGDHSVASLKETLHKCPWD. The short motif at 199 to 201 is the Integrin binding site element; that stretch reads RGD. A transmembrane helix spans residues 218–238; that stretch reads LLAISALTVLVVCVMIVLHVH. The Intravirion segment spans residues 239-240; that stretch reads AE. The hydrophobic stretch at 241 to 261 threads the membrane; sequence VFFGLSRYLPLFLCGAMASGG. Over 262 to 267 the chain is Virion surface; that stretch reads LYLGHS. A membrane pass occupies residues 268–288; that stretch reads SIIACVMATLCTLSSVVVYFL. The Intravirion segment spans residues 289 to 298; sequence HETLGPLGKT. The segment at 299 to 319 is a transmembrane helix; it reads VLFISIFVYYFSGVAALSAAM. Residues 320–335 lie on the Virion surface side of the membrane; the sequence is RYKLKKFVNGPLVHLR. Positions 336-356 form a transmembrane segment; that stretch reads VVYMCCFVFTFCEYLLVTFIK. Serine 357 is a topological domain (intravirion).

This sequence belongs to the herpesviridae BMRF2 family. As to quaternary structure, interacts with BDLF2. Interacts with host beta1 integrin family. In terms of processing, extensively glycosylated by O-linked oligosaccharides.

It localises to the virion membrane. Its subcellular location is the host cell membrane. Functionally, facilitates virus attachment to oral epithelial cells by binding to host beta1 integrin family. Participates in rearrangement of cellular actin to increase intercellular contacts by binding BDLF2 and thereby promote virus cell-to-cell spreading. This Homo sapiens (Human) protein is Protein BMRF2.